The primary structure comprises 186 residues: uncharacterized protein (186 aa).

Positions 1–28 (MSVKPAALFRISAALAVAGLGASLIASA) are cleaved as a signal peptide.

This is an uncharacterized protein from Rhizobium meliloti (strain 1021) (Ensifer meliloti).